A 652-amino-acid polypeptide reads, in one-letter code: DNA ligase (652 aa).

NAD(+) is bound by residues 29–33 (DSEYD), 78–79 (SL), and Glu-107. Lys-109 (N6-AMP-lysine intermediate) is an active-site residue. Arg-130, Glu-164, Lys-278, and Lys-302 together coordinate NAD(+). 4 residues coordinate Zn(2+): Cys-395, Cys-398, Cys-413, and Cys-418. The region spanning 577–652 (AADAALSGMT…IRDEDWLDSL (76 aa)) is the BRCT domain.

Belongs to the NAD-dependent DNA ligase family. LigA subfamily. Requires Mg(2+) as cofactor. The cofactor is Mn(2+).

It catalyses the reaction NAD(+) + (deoxyribonucleotide)n-3'-hydroxyl + 5'-phospho-(deoxyribonucleotide)m = (deoxyribonucleotide)n+m + AMP + beta-nicotinamide D-nucleotide.. In terms of biological role, DNA ligase that catalyzes the formation of phosphodiester linkages between 5'-phosphoryl and 3'-hydroxyl groups in double-stranded DNA using NAD as a coenzyme and as the energy source for the reaction. It is essential for DNA replication and repair of damaged DNA. The polypeptide is DNA ligase (Streptococcus sanguinis (strain SK36)).